We begin with the raw amino-acid sequence, 233 residues long: Probable septum site-determining protein MinC (233 aa).

A disordered region spans residues 104 to 124; sequence QKMATPEPAPAPAPVVDPNAP.

The protein belongs to the MinC family. In terms of assembly, interacts with MinD and FtsZ.

Its function is as follows. Cell division inhibitor that blocks the formation of polar Z ring septums. Rapidly oscillates between the poles of the cell to destabilize FtsZ filaments that have formed before they mature into polar Z rings. Prevents FtsZ polymerization. The chain is Probable septum site-determining protein MinC from Serratia proteamaculans (strain 568).